A 103-amino-acid chain; its full sequence is Large ribosomal subunit protein bL21 (103 aa).

This sequence belongs to the bacterial ribosomal protein bL21 family. Part of the 50S ribosomal subunit. Contacts protein L20.

In terms of biological role, this protein binds to 23S rRNA in the presence of protein L20. This is Large ribosomal subunit protein bL21 from Heliobacterium modesticaldum (strain ATCC 51547 / Ice1).